Here is a 325-residue protein sequence, read N- to C-terminus: Tagatose 1,6-diphosphate aldolase 1 (325 aa).

Belongs to the aldolase LacD family.

It carries out the reaction D-tagatofuranose 1,6-bisphosphate = D-glyceraldehyde 3-phosphate + dihydroxyacetone phosphate. It participates in carbohydrate metabolism; D-tagatose 6-phosphate degradation; D-glyceraldehyde 3-phosphate and glycerone phosphate from D-tagatose 6-phosphate: step 2/2. This Streptococcus mutans serotype c (strain ATCC 700610 / UA159) protein is Tagatose 1,6-diphosphate aldolase 1 (lacD1).